Consider the following 430-residue polypeptide: Toxin coregulated pilus biosynthesis protein B (430 aa).

Polar residues predominate over residues N351–K366. Residues N351–G371 are disordered.

Its function is as follows. Involved in TCP pilus biogenesis. This is Toxin coregulated pilus biosynthesis protein B (tcpB) from Vibrio cholerae serotype O1 (strain ATCC 39315 / El Tor Inaba N16961).